The chain runs to 197 residues: dITP/XTP pyrophosphatase (197 aa).

8 to 13 (TGNPGK) is a substrate binding site. Residues Glu-40 and Asp-69 each contribute to the Mg(2+) site. Asp-69 (proton acceptor) is an active-site residue. Substrate contacts are provided by residues Ser-70, 154 to 157 (FGYD), Lys-177, and 182 to 183 (HR).

Belongs to the HAM1 NTPase family. In terms of assembly, homodimer. The cofactor is Mg(2+).

The catalysed reaction is XTP + H2O = XMP + diphosphate + H(+). The enzyme catalyses dITP + H2O = dIMP + diphosphate + H(+). It carries out the reaction ITP + H2O = IMP + diphosphate + H(+). Its function is as follows. Pyrophosphatase that catalyzes the hydrolysis of nucleoside triphosphates to their monophosphate derivatives, with a high preference for the non-canonical purine nucleotides XTP (xanthosine triphosphate), dITP (deoxyinosine triphosphate) and ITP. Seems to function as a house-cleaning enzyme that removes non-canonical purine nucleotides from the nucleotide pool, thus preventing their incorporation into DNA/RNA and avoiding chromosomal lesions. The protein is dITP/XTP pyrophosphatase of Pectobacterium atrosepticum (strain SCRI 1043 / ATCC BAA-672) (Erwinia carotovora subsp. atroseptica).